The primary structure comprises 94 residues: Aspartyl/glutamyl-tRNA(Asn/Gln) amidotransferase subunit C (94 aa).

This sequence belongs to the GatC family. Heterotrimer of A, B and C subunits.

The catalysed reaction is L-glutamyl-tRNA(Gln) + L-glutamine + ATP + H2O = L-glutaminyl-tRNA(Gln) + L-glutamate + ADP + phosphate + H(+). It carries out the reaction L-aspartyl-tRNA(Asn) + L-glutamine + ATP + H2O = L-asparaginyl-tRNA(Asn) + L-glutamate + ADP + phosphate + 2 H(+). Functionally, allows the formation of correctly charged Asn-tRNA(Asn) or Gln-tRNA(Gln) through the transamidation of misacylated Asp-tRNA(Asn) or Glu-tRNA(Gln) in organisms which lack either or both of asparaginyl-tRNA or glutaminyl-tRNA synthetases. The reaction takes place in the presence of glutamine and ATP through an activated phospho-Asp-tRNA(Asn) or phospho-Glu-tRNA(Gln). In Caldicellulosiruptor saccharolyticus (strain ATCC 43494 / DSM 8903 / Tp8T 6331), this protein is Aspartyl/glutamyl-tRNA(Asn/Gln) amidotransferase subunit C.